We begin with the raw amino-acid sequence, 338 residues long: D-erythrose-4-phosphate dehydrogenase (338 aa).

11–12 (RI) provides a ligand contact to NAD(+). Substrate contacts are provided by residues 153 to 155 (SCT), arginine 199, 212 to 213 (TK), and arginine 235. The active-site Nucleophile is cysteine 154. Asparagine 317 contributes to the NAD(+) binding site.

It belongs to the glyceraldehyde-3-phosphate dehydrogenase family. Epd subfamily. In terms of assembly, homotetramer.

The protein resides in the cytoplasm. The catalysed reaction is D-erythrose 4-phosphate + NAD(+) + H2O = 4-phospho-D-erythronate + NADH + 2 H(+). It participates in cofactor biosynthesis; pyridoxine 5'-phosphate biosynthesis; pyridoxine 5'-phosphate from D-erythrose 4-phosphate: step 1/5. Functionally, catalyzes the NAD-dependent conversion of D-erythrose 4-phosphate to 4-phosphoerythronate. In Shewanella sp. (strain MR-4), this protein is D-erythrose-4-phosphate dehydrogenase.